A 100-amino-acid chain; its full sequence is Spleen trypsin inhibitor I (100 aa).

The first 21 residues, 1–21, serve as a signal peptide directing secretion; the sequence is MKMSRLCLSIALLVLLGTLAA. The propeptide occupies 22-33; the sequence is STPGCDTSNQAK. The 51-residue stretch at 40–90 folds into the BPTI/Kunitz inhibitor domain; that stretch reads CLEPPYTGPCKAKMIRYFYNAKAGFCETFVYGGCKAKSNNFRSAEDCMRTC. Intrachain disulfides connect cysteine 40–cysteine 90, cysteine 49–cysteine 73, and cysteine 65–cysteine 86. Residue leucine 100 is a propeptide.

It localises to the secreted. The protein is Spleen trypsin inhibitor I of Bos taurus (Bovine).